A 768-amino-acid chain; its full sequence is Probable beta-glucosidase M (768 aa).

The N-terminal stretch at 1–19 (MHAIAGLTGFLAGVSLSYA) is a signal peptide. 3 N-linked (GlcNAc...) asparagine glycosylation sites follow: asparagine 25, asparagine 72, and asparagine 259. Residue aspartate 287 is part of the active site. 7 N-linked (GlcNAc...) asparagine glycosylation sites follow: asparagine 315, asparagine 322, asparagine 394, asparagine 434, asparagine 472, asparagine 543, and asparagine 651.

Belongs to the glycosyl hydrolase 3 family.

Its subcellular location is the secreted. The enzyme catalyses Hydrolysis of terminal, non-reducing beta-D-glucosyl residues with release of beta-D-glucose.. It functions in the pathway glycan metabolism; cellulose degradation. Its function is as follows. Beta-glucosidases are one of a number of cellulolytic enzymes involved in the degradation of cellulosic biomass. Catalyzes the last step releasing glucose from the inhibitory cellobiose. The chain is Probable beta-glucosidase M (bglM) from Aspergillus flavus (strain ATCC 200026 / FGSC A1120 / IAM 13836 / NRRL 3357 / JCM 12722 / SRRC 167).